A 280-amino-acid polypeptide reads, in one-letter code: Type 1 encapsulin shell protein (280 aa).

This sequence belongs to the encapsulin family. Family 1 subfamily. This encapsulin nanocompartment is formed by 60 subunits; monomers form pentamers which assemble to form shells. There are 12 pores where the pentamers meet as well as 3-fold axis channels and dimer channels; none are larger than 3-4 Angstroms in diameter. The N-terminus of the protein is inside the shell, the C-terminus is outside.

Its subcellular location is the encapsulin nanocompartment. Shell component of a type 1 encapsulin nanocompartment. Assembles into proteinaceous icosahedral shells 24 nm in diameter in the presence and absence of its ferritin cargo protein. The center of cargo-loaded nanocompartments is loaded with iron. The empty encapsulin nanocompartment sequesters about 2200 Fe ions while the cargo-loaded nanocompartment can maximally sequester about 4150 Fe ions. Does not have any detectable ferroxidase activity. This Rhodospirillum rubrum (strain ATCC 11170 / ATH 1.1.1 / DSM 467 / LMG 4362 / NCIMB 8255 / S1) protein is Type 1 encapsulin shell protein.